We begin with the raw amino-acid sequence, 372 residues long: Glutamate 5-kinase (372 aa).

Residue lysine 14 participates in ATP binding. The substrate site is built by serine 54, aspartate 141, and asparagine 153. 173–174 contributes to the ATP binding site; it reads TD. Residues 280–358 form the PUA domain; it reads RGHVVIDAGA…GEIESVLGYM (79 aa).

The protein belongs to the glutamate 5-kinase family.

It localises to the cytoplasm. It catalyses the reaction L-glutamate + ATP = L-glutamyl 5-phosphate + ADP. It functions in the pathway amino-acid biosynthesis; L-proline biosynthesis; L-glutamate 5-semialdehyde from L-glutamate: step 1/2. In terms of biological role, catalyzes the transfer of a phosphate group to glutamate to form L-glutamate 5-phosphate. The sequence is that of Glutamate 5-kinase from Burkholderia lata (strain ATCC 17760 / DSM 23089 / LMG 22485 / NCIMB 9086 / R18194 / 383).